We begin with the raw amino-acid sequence, 440 residues long: Chromosome partition protein MukF (440 aa).

Residues 208–236 (LSETSGTLRELQDTLDAAGDKLQANLLRI) are leucine-zipper.

It belongs to the MukF family. Interacts, and probably forms a ternary complex, with MukE and MukB via its C-terminal region. The complex formation is stimulated by calcium or magnesium. It is required for an interaction between MukE and MukB.

Its subcellular location is the cytoplasm. The protein localises to the nucleoid. Involved in chromosome condensation, segregation and cell cycle progression. May participate in facilitating chromosome segregation by condensation DNA from both sides of a centrally located replisome during cell division. Not required for mini-F plasmid partitioning. Probably acts via its interaction with MukB and MukE. Overexpression results in anucleate cells. It has a calcium binding activity. This Klebsiella pneumoniae subsp. pneumoniae (strain ATCC 700721 / MGH 78578) protein is Chromosome partition protein MukF.